A 184-amino-acid polypeptide reads, in one-letter code: ATP synthase subunit b 1 (184 aa).

Residues 4–24 form a helical membrane-spanning segment; that stretch reads LSILAALAASPAMAATGPFFS.

It belongs to the ATPase B chain family. In terms of assembly, F-type ATPases have 2 components, F(1) - the catalytic core - and F(0) - the membrane proton channel. F(1) has five subunits: alpha(3), beta(3), gamma(1), delta(1), epsilon(1). F(0) has three main subunits: a(1), b(2) and c(10-14). The alpha and beta chains form an alternating ring which encloses part of the gamma chain. F(1) is attached to F(0) by a central stalk formed by the gamma and epsilon chains, while a peripheral stalk is formed by the delta and b chains.

It is found in the cell inner membrane. Its function is as follows. F(1)F(0) ATP synthase produces ATP from ADP in the presence of a proton or sodium gradient. F-type ATPases consist of two structural domains, F(1) containing the extramembraneous catalytic core and F(0) containing the membrane proton channel, linked together by a central stalk and a peripheral stalk. During catalysis, ATP synthesis in the catalytic domain of F(1) is coupled via a rotary mechanism of the central stalk subunits to proton translocation. Component of the F(0) channel, it forms part of the peripheral stalk, linking F(1) to F(0). The sequence is that of ATP synthase subunit b 1 from Cereibacter sphaeroides (strain ATCC 17025 / ATH 2.4.3) (Rhodobacter sphaeroides).